The chain runs to 211 residues: Protein-methionine-sulfoxide reductase heme-binding subunit MsrQ (211 aa).

The next 5 membrane-spanning stretches (helical) occupy residues 45–65, 82–102, 116–136, 153–173, and 178–198; these read HFTGLTALKFLLAALLITPLA, LWCFAWATLHLTSYALLELGV, PYLTLGIISWVILLALAFTST, FVYLVAILAPIHYLWSVKIIS, and IYAGLAVLLLALRYKKLLSLF.

Belongs to the MsrQ family. In terms of assembly, heterodimer of a catalytic subunit (MsrP) and a heme-binding subunit (MsrQ). FMN is required as a cofactor. Requires heme b as cofactor.

The protein localises to the cell inner membrane. In terms of biological role, part of the MsrPQ system that repairs oxidized periplasmic proteins containing methionine sulfoxide residues (Met-O), using respiratory chain electrons. Thus protects these proteins from oxidative-stress damage caused by reactive species of oxygen and chlorine generated by the host defense mechanisms. MsrPQ is essential for the maintenance of envelope integrity under bleach stress, rescuing a wide series of structurally unrelated periplasmic proteins from methionine oxidation, including the primary periplasmic chaperone SurA and the lipoprotein Pal. MsrQ provides electrons for reduction to the reductase catalytic subunit MsrP, using the quinone pool of the respiratory chain. This Escherichia coli O127:H6 (strain E2348/69 / EPEC) protein is Protein-methionine-sulfoxide reductase heme-binding subunit MsrQ.